The sequence spans 270 residues: NADPH-dependent 7-cyano-7-deazaguanine reductase (270 aa).

79–81 (IES) provides a ligand contact to substrate. Residue 81 to 82 (SK) coordinates NADPH. Cysteine 177 (thioimide intermediate) is an active-site residue. Aspartate 184 (proton donor) is an active-site residue. 216 to 217 (HE) lines the substrate pocket. 245 to 246 (RG) is an NADPH binding site.

This sequence belongs to the GTP cyclohydrolase I family. QueF type 2 subfamily. In terms of assembly, homodimer.

The protein resides in the cytoplasm. It catalyses the reaction 7-aminomethyl-7-carbaguanine + 2 NADP(+) = 7-cyano-7-deazaguanine + 2 NADPH + 3 H(+). It functions in the pathway tRNA modification; tRNA-queuosine biosynthesis. Functionally, catalyzes the NADPH-dependent reduction of 7-cyano-7-deazaguanine (preQ0) to 7-aminomethyl-7-deazaguanine (preQ1). The sequence is that of NADPH-dependent 7-cyano-7-deazaguanine reductase from Acinetobacter baumannii (strain ATCC 17978 / DSM 105126 / CIP 53.77 / LMG 1025 / NCDC KC755 / 5377).